The primary structure comprises 51 residues: Sperm protamine P1 (51 aa).

Belongs to the protamine P1 family. As to quaternary structure, cross-linked by interchain disulfide bonds around the DNA-helix. As to expression, testis.

The protein resides in the nucleus. Its subcellular location is the chromosome. In terms of biological role, protamines substitute for histones in the chromatin of sperm during the haploid phase of spermatogenesis. They compact sperm DNA into a highly condensed, stable and inactive complex. The polypeptide is Sperm protamine P1 (PRM1) (Pongo pygmaeus (Bornean orangutan)).